Consider the following 214-residue polypeptide: Adenylate kinase (214 aa).

10–15 provides a ligand contact to ATP; sequence GAGKGT. An NMP region spans residues 30 to 59; sequence STGDIFRANIKNGTELGKKAKTYMDQGALV. AMP is bound by residues Thr-31, Arg-36, 57 to 59, 85 to 88, and Gln-92; these read ALV and GFPR. Positions 126–163 are LID; that stretch reads GRRACLNCGATYHIVFNPTKVEGKCDACGADTVLRDDD. An ATP-binding site is contributed by Arg-127. Residues Cys-130 and Cys-133 each contribute to the Zn(2+) site. 136 to 137 is an ATP binding site; the sequence is TY. Zn(2+) contacts are provided by Cys-150 and Cys-153. Residues Arg-160 and Arg-171 each contribute to the AMP site. Lys-199 contributes to the ATP binding site.

It belongs to the adenylate kinase family. In terms of assembly, monomer.

It is found in the cytoplasm. The enzyme catalyses AMP + ATP = 2 ADP. Its pathway is purine metabolism; AMP biosynthesis via salvage pathway; AMP from ADP: step 1/1. Catalyzes the reversible transfer of the terminal phosphate group between ATP and AMP. Plays an important role in cellular energy homeostasis and in adenine nucleotide metabolism. This is Adenylate kinase from Agathobacter rectalis (strain ATCC 33656 / DSM 3377 / JCM 17463 / KCTC 5835 / VPI 0990) (Eubacterium rectale).